The chain runs to 253 residues: Triosephosphate isomerase (253 aa).

Position 12–14 (12–14 (NWK)) interacts with substrate. The Electrophile role is filled by His100. The active-site Proton acceptor is the Glu170. Substrate is bound by residues Gly176, Ser215, and 236–237 (GG).

Belongs to the triosephosphate isomerase family. Homodimer.

It localises to the cytoplasm. It catalyses the reaction D-glyceraldehyde 3-phosphate = dihydroxyacetone phosphate. Its pathway is carbohydrate biosynthesis; gluconeogenesis. It participates in carbohydrate degradation; glycolysis; D-glyceraldehyde 3-phosphate from glycerone phosphate: step 1/1. In terms of biological role, involved in the gluconeogenesis. Catalyzes stereospecifically the conversion of dihydroxyacetone phosphate (DHAP) to D-glyceraldehyde-3-phosphate (G3P). The protein is Triosephosphate isomerase of Rhodopseudomonas palustris (strain BisA53).